The chain runs to 396 residues: Calsequestrin-1 (396 aa).

A signal peptide spans 1–34; sequence MSATDRMGPRAVPGLRLALLLLLVLGTPKSGVQG. Position 43 is a phosphotyrosine (Tyr-43). Ser-81 carries the phosphoserine modification. The residue at position 124 (Thr-124) is a Phosphothreonine. Ser-216 carries the phosphoserine modification. Asn-350 is a glycosylation site (N-linked (GlcNAc...) asparagine).

This sequence belongs to the calsequestrin family. In terms of assembly, monomer; increases in response to a depletion of intracellular calcium. Homodimer. Homotetramer and homopolymer. Can form linear homooligomers. Ca(2+) ions promote oligomerization. Interacts (via C-terminal end and preferentially with the monomeric form) with STIM1; this interaction increases in response to a depletion of intracellular calcium, decreases both STIM1 aggregation and clustering, interaction of STIM1 with ORAI1 and store-operated Ca(2+) entry (SOCE) activity. Interacts with ASPH and TRDN. Post-translationally, N-glycosylated. As to expression, expressed in myoblasts (at protein level).

The protein localises to the endoplasmic reticulum. It localises to the sarcoplasmic reticulum. It is found in the sarcoplasmic reticulum lumen. The protein resides in the sarcoplasmic reticulum membrane. Its subcellular location is the mitochondrion matrix. Calsequestrin is a high-capacity, moderate affinity, calcium-binding protein and thus acts as an internal calcium store in muscle. Calcium ions are bound by clusters of acidic residues at the protein surface, often at the interface between subunits. Can bind around 80 Ca(2+) ions. Regulates the release of lumenal Ca(2+) via the calcium release channel RYR1; this plays an important role in triggering muscle contraction. Negatively regulates store-operated Ca(2+) entry (SOCE) activity. The protein is Calsequestrin-1 (CASQ1) of Homo sapiens (Human).